A 559-amino-acid polypeptide reads, in one-letter code: 3-aminoavenalumate diazotase (559 aa).

Ser-181 provides a ligand contact to Mg(2+). ATP is bound by residues Ala-227, Gly-332, and Ser-336. Glu-337 contributes to the Mg(2+) binding site. Residues Asp-416 and Arg-437 each contribute to the ATP site.

This sequence belongs to the ATP-dependent AMP-binding enzyme family. Requires Mg(2+) as cofactor.

It carries out the reaction 3-aminoavenalumate + nitrite + ATP = 3-diazoavenalumate + AMP + diphosphate + H2O. The enzyme catalyses (E)-3-aminocoumarate + nitrite + ATP + H(+) = (E)-3-diazocoumarate + AMP + diphosphate + H2O. The catalysed reaction is 3-amino-4-hydroxybenzoate + nitrite + ATP + H(+) = 3-diazo-4-hydroxybenzoate + AMP + diphosphate + H2O. In terms of biological role, ligase involved in the biosynthesis of avenalumic acid (AVA). Catalyzes the diazotization of 3-aminoavenalumic acid (3-AAA) to 3-diazoavenalumic acid (3-DAA). It can also act on 3-aminocoumaric acid (3-ACA) and 3-amino-4-hydroxybenzoic acid (3,4-AHBA) with lower activity. The chain is 3-aminoavenalumate diazotase from Streptomyces sp.